The primary structure comprises 546 residues: Tryptophan biosynthesis protein TrpCD (546 aa).

The segment at 1–226 (MMDFGFVDSL…FVQTVCGGEK (226 aa)) is indole-3-glycerol phosphate synthase. Residues 227–546 (MIEDVLRGLD…EEIACKSTSM (320 aa)) form an anthranilate phosphoribosyltransferase region. 5-phospho-alpha-D-ribose 1-diphosphate-binding positions include G295, 298 to 299 (GD), S303, 305 to 308 (NVST), 322 to 330 (KHGNRAVSS), and S334. G295 is a binding site for anthranilate. S307 serves as a coordination point for Mg(2+). N325 is a binding site for anthranilate. Residue R380 coordinates anthranilate. The Mg(2+) site is built by D437 and E438.

This sequence in the N-terminal section; belongs to the TrpC family. In the C-terminal section; belongs to the anthranilate phosphoribosyltransferase family. Mg(2+) serves as cofactor.

It catalyses the reaction 1-(2-carboxyphenylamino)-1-deoxy-D-ribulose 5-phosphate + H(+) = (1S,2R)-1-C-(indol-3-yl)glycerol 3-phosphate + CO2 + H2O. It carries out the reaction N-(5-phospho-beta-D-ribosyl)anthranilate + diphosphate = 5-phospho-alpha-D-ribose 1-diphosphate + anthranilate. It functions in the pathway amino-acid biosynthesis; L-tryptophan biosynthesis; L-tryptophan from chorismate: step 2/5. The protein operates within amino-acid biosynthesis; L-tryptophan biosynthesis; L-tryptophan from chorismate: step 4/5. Bifunctional enzyme that catalyzes the second and fourth steps of tryptophan biosynthetic pathway. The second step is catalyzed by the anthranilate phosphoribosyltransferase, coded by the TrpD domain and the fourth step is catalyzed by indole-3-glycerol phosphate synthase, coded by the TrpC domain. The chain is Tryptophan biosynthesis protein TrpCD (trpCD) from Archaeoglobus fulgidus (strain ATCC 49558 / DSM 4304 / JCM 9628 / NBRC 100126 / VC-16).